Consider the following 177-residue polypeptide: 2-C-methyl-D-erythritol 2,4-cyclodiphosphate synthase (177 aa).

A divalent metal cation is bound by residues Asp-23 and His-25. Residues 23–25 (DVH) and 49–50 (HS) contribute to the 4-CDP-2-C-methyl-D-erythritol 2-phosphate site. His-57 serves as a coordination point for a divalent metal cation. 4-CDP-2-C-methyl-D-erythritol 2-phosphate contacts are provided by residues 71–73 (DIG), 76–80 (FSDTD), 115–121 (AQAPRMA), and Arg-157.

Belongs to the IspF family. As to quaternary structure, homotrimer. It depends on a divalent metal cation as a cofactor.

It carries out the reaction 4-CDP-2-C-methyl-D-erythritol 2-phosphate = 2-C-methyl-D-erythritol 2,4-cyclic diphosphate + CMP. The protein operates within isoprenoid biosynthesis; isopentenyl diphosphate biosynthesis via DXP pathway; isopentenyl diphosphate from 1-deoxy-D-xylulose 5-phosphate: step 4/6. Its function is as follows. Involved in the biosynthesis of isopentenyl diphosphate (IPP) and dimethylallyl diphosphate (DMAPP), two major building blocks of isoprenoid compounds. Catalyzes the conversion of 4-diphosphocytidyl-2-C-methyl-D-erythritol 2-phosphate (CDP-ME2P) to 2-C-methyl-D-erythritol 2,4-cyclodiphosphate (ME-CPP) with a corresponding release of cytidine 5-monophosphate (CMP). The sequence is that of 2-C-methyl-D-erythritol 2,4-cyclodiphosphate synthase from Nitrosospira multiformis (strain ATCC 25196 / NCIMB 11849 / C 71).